The primary structure comprises 310 residues: GTPase Era (310 aa).

In terms of domain architecture, Era-type G spans 17–184; the sequence is RSGFVALIGA…MDYLAERLPE (168 aa). A G1 region spans residues 25 to 32; it reads GATNAGKS. Position 25–32 (25–32) interacts with GTP; sequence GATNAGKS. The tract at residues 51-55 is G2; sequence QTTRA. Residues 72-75 form a G3 region; it reads DTPG. Residues 72–76 and 134–137 each bind GTP; these read DTPGI and NKVD. A G4 region spans residues 134 to 137; sequence NKVD. Positions 163 to 165 are G5; the sequence is ISA. The KH type-2 domain occupies 215-292; the sequence is LHQELPYASH…HLFLFVKVRE (78 aa).

The protein belongs to the TRAFAC class TrmE-Era-EngA-EngB-Septin-like GTPase superfamily. Era GTPase family. In terms of assembly, monomer.

The protein localises to the cytoplasm. Its subcellular location is the cell inner membrane. An essential GTPase that binds both GDP and GTP, with rapid nucleotide exchange. Plays a role in 16S rRNA processing and 30S ribosomal subunit biogenesis and possibly also in cell cycle regulation and energy metabolism. This is GTPase Era from Sinorhizobium medicae (strain WSM419) (Ensifer medicae).